Reading from the N-terminus, the 172-residue chain is Neudesin (172 aa).

The first 31 residues, 1-31 (MVGPAPRRRLRPLAALALVLALAPGLPTARA), serve as a signal peptide directing secretion. The Cytochrome b5 heme-binding domain maps to 44–129 (VRLFTEEELA…KELEALDEVF (86 aa)). K136 carries the N6-acetyllysine modification. The segment at 151-172 (DGSPNLDFKPEDQPHFDIKDEF) is disordered. A compositionally biased stretch (basic and acidic residues) spans 158–172 (FKPEDQPHFDIKDEF).

This sequence belongs to the cytochrome b5 family. MAPR subfamily. As to quaternary structure, interacts with PINK1 and PARK7. As to expression, ubiquitously expressed with high expression in heart. Over-expressed in various tumors including carcinomas of the uterine cervix, lymphoma, colon, lung, skin and leukemia, as well as carcinoma of the breast.

It localises to the secreted. Its subcellular location is the extracellular space. The protein localises to the mitochondrion. The protein resides in the endoplasmic reticulum. In terms of biological role, acts as a neurotrophic factor in postnatal mature neurons enhancing neuronal survival. Promotes cell proliferation and neurogenesis in undifferentiated neural progenitor cells at the embryonic stage and inhibits differentiation of astrocytes. Its neurotrophic activity is exerted via MAPK1/ERK2, MAPK3/ERK1 and AKT1/AKT pathways. Neurotrophic activity is enhanced by binding to heme. Also acts as an anorexigenic neurotrophic factor that contributes to energy balance. This Homo sapiens (Human) protein is Neudesin.